The sequence spans 336 residues: GTPase Obg (336 aa).

In terms of domain architecture, Obg spans methionine 1–leucine 159. Residues alanine 160–asparagine 333 form the OBG-type G domain. Residues glycine 166–serine 173, phenylalanine 191–valine 195, aspartate 213–glycine 216, asparagine 283–aspartate 286, and serine 314–methionine 316 each bind GTP. Mg(2+)-binding residues include serine 173 and threonine 193.

It belongs to the TRAFAC class OBG-HflX-like GTPase superfamily. OBG GTPase family. Monomer. Mg(2+) is required as a cofactor.

Its subcellular location is the cytoplasm. An essential GTPase which binds GTP, GDP and possibly (p)ppGpp with moderate affinity, with high nucleotide exchange rates and a fairly low GTP hydrolysis rate. Plays a role in control of the cell cycle, stress response, ribosome biogenesis and in those bacteria that undergo differentiation, in morphogenesis control. The polypeptide is GTPase Obg (Baumannia cicadellinicola subsp. Homalodisca coagulata).